Here is a 71-residue protein sequence, read N- to C-terminus: Exodeoxyribonuclease 7 small subunit (71 aa).

The protein belongs to the XseB family. In terms of assembly, heterooligomer composed of large and small subunits.

It localises to the cytoplasm. It catalyses the reaction Exonucleolytic cleavage in either 5'- to 3'- or 3'- to 5'-direction to yield nucleoside 5'-phosphates.. Functionally, bidirectionally degrades single-stranded DNA into large acid-insoluble oligonucleotides, which are then degraded further into small acid-soluble oligonucleotides. This chain is Exodeoxyribonuclease 7 small subunit, found in Streptococcus pyogenes serotype M1.